The chain runs to 144 residues: Large ribosomal subunit protein uL15 (144 aa).

The segment at 1–59 is disordered; the sequence is MRLNTISPAEGSKPTGKRSGRGIGSGLGKTGGVGHKGQKSRSGGRVKPGFEGGQMPIQR. The span at 21 to 35 shows a compositional bias: gly residues; the sequence is RGIGSGLGKTGGVGH.

This sequence belongs to the universal ribosomal protein uL15 family. As to quaternary structure, part of the 50S ribosomal subunit.

In terms of biological role, binds to the 23S rRNA. The chain is Large ribosomal subunit protein uL15 from Alteromonas mediterranea (strain DSM 17117 / CIP 110805 / LMG 28347 / Deep ecotype).